Reading from the N-terminus, the 805-residue chain is Probable phosphoketolase (805 aa).

Belongs to the XFP family. Requires thiamine diphosphate as cofactor.

This is Probable phosphoketolase from Synechocystis sp. (strain ATCC 27184 / PCC 6803 / Kazusa).